The sequence spans 358 residues: Alanine racemase (358 aa).

The active-site Proton acceptor; specific for D-alanine is the Lys-35. Lys-35 carries the N6-(pyridoxal phosphate)lysine modification. Residue Arg-130 participates in substrate binding. Residue Tyr-255 is the Proton acceptor; specific for L-alanine of the active site. Met-303 contacts substrate.

This sequence belongs to the alanine racemase family. Pyridoxal 5'-phosphate serves as cofactor.

It carries out the reaction L-alanine = D-alanine. The protein operates within amino-acid biosynthesis; D-alanine biosynthesis; D-alanine from L-alanine: step 1/1. Functionally, catalyzes the interconversion of L-alanine and D-alanine. May also act on other amino acids. The protein is Alanine racemase (alr) of Shewanella woodyi (strain ATCC 51908 / MS32).